Consider the following 392-residue polypeptide: Ceramide synthase 5 (392 aa).

Residues 1–46 (MATAAQGPLSLLWGWLWSERFWLPENVSWADLEGPADGYGYPRGRH) lie on the Lumenal side of the membrane. An N-linked (GlcNAc...) asparagine glycan is attached at N26. Residues 47–67 (ILSVFPLAAGIFFVRLLFERF) traverse the membrane as a helical segment. The interval 75–136 (CIGIEDSGPY…RHRRNQDKPP (62 aa)) is homeobox-like. The TLC domain maps to 139 to 340 (TKFCESMWRF…IARIALKALI (202 aa)). 4 helical membrane-spanning segments follow: residues 148–168 (FTFY…SPWF), 183–203 (LSSG…SLMF), 214–234 (FLIM…SYIN), and 272–292 (LFVI…PFWI). The short motif at 299 to 309 (ESWEIIGPYAS) is the Last loop motif element. Residues 311–331 (WLLNGLLLTLQLLHVIWSYLI) form a helical membrane-spanning segment. Residues 332–392 (ARIALKALIR…HMGGSYWAEE (61 aa)) lie on the Cytoplasmic side of the membrane. Residues 349 to 392 (RSDVESSSEEEDVTTCTKSPCDSSSSNGANRVNGHMGGSYWAEE) form a disordered region. Residues 362–378 (TTCTKSPCDSSSSNGAN) show a composition bias toward polar residues.

Interacts with PAQR4; the interaction regulates the stability and activity of CERS5 and is inhibited in presence of ceramides. Phosphorylated at the C-terminus by CK2.

It localises to the endoplasmic reticulum membrane. It catalyses the reaction a sphingoid base + hexadecanoyl-CoA = an N-hexadecanoyl-sphingoid base + CoA + H(+). The catalysed reaction is sphinganine + hexadecanoyl-CoA = N-hexadecanoylsphinganine + CoA + H(+). It carries out the reaction hexadecasphinganine + hexadecanoyl-CoA = N-hexadecanoylhexadecasphinganine + CoA + H(+). The enzyme catalyses sphing-4-enine + hexadecanoyl-CoA = N-hexadecanoylsphing-4-enine + CoA + H(+). It catalyses the reaction 2-hydroxyhexadecanoyl-CoA + sphinganine = N-(2-hydroxyhexadecanoyl)-sphinganine + CoA + H(+). The catalysed reaction is sphinganine + tetradecanoyl-CoA = N-(tetradecanoyl)-sphinganine + CoA + H(+). It carries out the reaction sphinganine + octadecanoyl-CoA = N-(octadecanoyl)-sphinganine + CoA + H(+). The enzyme catalyses sphinganine + (9Z)-octadecenoyl-CoA = N-(9Z-octadecenoyl)-sphinganine + CoA + H(+). It catalyses the reaction a fatty acyl-CoA + sphing-4-enine = an N-acylsphing-4-enine + CoA + H(+). The protein operates within lipid metabolism; sphingolipid metabolism. Inhibited by fumonisin B1. Ceramide synthase that catalyzes the transfer of the acyl chain from acyl-CoA to a sphingoid base, with high selectivity toward palmitoyl-CoA (hexadecanoyl-CoA; C16:0-CoA). Can use other acyl donors, but with less efficiency. N-acylates sphinganine and sphingosine bases to form dihydroceramides and ceramides in de novo synthesis and salvage pathways, respectively. Plays a role in de novo ceramide synthesis and surfactant homeostasis in pulmonary epithelia. This chain is Ceramide synthase 5, found in Homo sapiens (Human).